A 247-amino-acid chain; its full sequence is Cell division protein ZapD (247 aa).

Belongs to the ZapD family. As to quaternary structure, interacts with FtsZ.

It localises to the cytoplasm. Functionally, cell division factor that enhances FtsZ-ring assembly. Directly interacts with FtsZ and promotes bundling of FtsZ protofilaments, with a reduction in FtsZ GTPase activity. The sequence is that of Cell division protein ZapD from Cronobacter sakazakii (strain ATCC BAA-894) (Enterobacter sakazakii).